We begin with the raw amino-acid sequence, 442 residues long: Putative helicase 161L (442 aa).

The region spanning 88-241 is the Helicase ATP-binding domain; the sequence is IDILEKNHSV…LFPIFFGKEK (154 aa). Position 101–108 (101–108) interacts with ATP; the sequence is CFTGFGKT. The DEAH box signature appears at 194–197; sequence DEVH.

Belongs to the DEAD box helicase family. DEAH subfamily.

In Invertebrate iridescent virus 6 (IIV-6), this protein is Putative helicase 161L.